The following is a 224-amino-acid chain: Histone H1.03 (224 aa).

Composition is skewed to low complexity over residues 1 to 22 and 30 to 42; these read MAET…AKAA and AAGG…PAGP. Disordered regions lie at residues 1–43 and 99–224; these read MAET…AGPS and QTKG…PKKK. The region spanning 40–113 is the H15 domain; it reads AGPSVTELIT…GASGSFRLSK (74 aa). Basic residues-rich tracts occupy residues 122–137, 145–162, 170–188, and 197–224; these read APKK…KPAA, KKPK…KAKK, KAAK…KKAV, and KAVK…PKKK.

The protein belongs to the histone H1/H5 family.

Its subcellular location is the nucleus. It localises to the chromosome. Functionally, histones H1 are necessary for the condensation of nucleosome chains into higher-order structures. The sequence is that of Histone H1.03 from Gallus gallus (Chicken).